The primary structure comprises 725 residues: Catalase B (725 aa).

The first 15 residues, 1–15 (MRALSLASLIGIASA), serve as a signal peptide directing secretion. The propeptide occupies 16–27 (ACPYMTGELERR). N-linked (GlcNAc...) asparagine glycosylation occurs at N50. Residue H101 is part of the active site. The N-linked (GlcNAc...) asparagine glycan is linked to N119. Residue N174 is part of the active site. Heme is bound at residue Y388. Residues N447, N550, and N645 are each glycosylated (N-linked (GlcNAc...) asparagine).

It belongs to the catalase family. Homotetramer. It depends on heme as a cofactor.

Its subcellular location is the secreted. It carries out the reaction 2 H2O2 = O2 + 2 H2O. Occurs in almost all aerobically respiring organisms and serves to protect cells from the toxic effects of hydrogen peroxide through its degradation into water and oxygen. The chain is Catalase B (catB) from Aspergillus oryzae (strain ATCC 42149 / RIB 40) (Yellow koji mold).